We begin with the raw amino-acid sequence, 461 residues long: tRNA modification GTPase MnmE (461 aa).

Residues Arg-23, Glu-88, and Arg-127 each contribute to the (6S)-5-formyl-5,6,7,8-tetrahydrofolate site. Positions 223-382 constitute a TrmE-type G domain; that stretch reads GLSTVIVGKP…IEDALAEMVY (160 aa). Asn-233 is a binding site for K(+). GTP-binding positions include 233-238, 252-258, and 277-280; these read NVGKSS, TDVPGTT, and DTAG. Ser-237 contributes to the Mg(2+) binding site. K(+) contacts are provided by Thr-252, Val-254, and Thr-257. Residue Thr-258 participates in Mg(2+) binding. Position 461 (Lys-461) interacts with (6S)-5-formyl-5,6,7,8-tetrahydrofolate.

Belongs to the TRAFAC class TrmE-Era-EngA-EngB-Septin-like GTPase superfamily. TrmE GTPase family. In terms of assembly, homodimer. Heterotetramer of two MnmE and two MnmG subunits. The cofactor is K(+).

It localises to the cytoplasm. In terms of biological role, exhibits a very high intrinsic GTPase hydrolysis rate. Involved in the addition of a carboxymethylaminomethyl (cmnm) group at the wobble position (U34) of certain tRNAs, forming tRNA-cmnm(5)s(2)U34. This Alkaliphilus oremlandii (strain OhILAs) (Clostridium oremlandii (strain OhILAs)) protein is tRNA modification GTPase MnmE.